Consider the following 567-residue polypeptide: Unguisins hydrolase ungD (567 aa).

The protein belongs to the peptidase S12 family.

The protein operates within secondary metabolite biosynthesis. Its function is as follows. Hydrolase; part of the gene cluster that mediates the biosynthesis of the unguisins, gamma-aminobutyric acid (GABA)-containing fungal cyclic heptapeptides with the amino acid sequence cyclo-(D-Ala1-D-Val2-L-Phe3-D-Val4-D-Ala5-D-Trp6-GABA7) for unguisin A and cyclo-(D-Ala1-D-Val2-L-Leu3-D-Val4-D-Ala5-D-Trp6-GABA7) for unguisin B. Within the pathway, the hydrolase ungD catalyzes the hydrolysis between the D-tryptophan and GABA residues of unguisins A and B to produce the corresponding linear peptides. The alanine racemase ungC catalyzes the interconversion of L-alanine and D-alanine, providing the D-alanine which is accepted by the first adenylation domain of the nonribosomal peptide synthetase (NRPS) ungA. UngA is the main enzyme within the cluster which condenses the 7 residues using its respective 7 modules. The terminal condensation domain (Ct) is involved in cyclization with D-alanine and thereby releasing of unguisins A and B. This is Unguisins hydrolase ungD from Aspergillus violaceofuscus (strain CBS 115571).